Consider the following 146-residue polypeptide: Anti-sigma F factor (146 aa).

It belongs to the anti-sigma-factor family.

The catalysed reaction is L-seryl-[protein] + ATP = O-phospho-L-seryl-[protein] + ADP + H(+). It carries out the reaction L-threonyl-[protein] + ATP = O-phospho-L-threonyl-[protein] + ADP + H(+). Binds to sigma F and blocks its ability to form an RNA polymerase holoenzyme (E-sigma F). Phosphorylates SpoIIAA on a serine residue. This phosphorylation may enable SpoIIAA to act as an anti-anti-sigma factor that counteracts SpoIIAB and thus releases sigma F from inhibition. This is Anti-sigma F factor from Bacillus velezensis (strain DSM 23117 / BGSC 10A6 / LMG 26770 / FZB42) (Bacillus amyloliquefaciens subsp. plantarum).